Here is a 596-residue protein sequence, read N- to C-terminus: UvrABC system protein C (596 aa).

One can recognise a GIY-YIG domain in the interval 14-91; that stretch reads DQPGCYLMKD…IKLHDPKYNV (78 aa). One can recognise a UVR domain in the interval 196 to 231; sequence EAVKKELEVKMLAAAENLEFERAKEFRDQIAHIDTV.

It belongs to the UvrC family. In terms of assembly, interacts with UvrB in an incision complex.

Its subcellular location is the cytoplasm. Its function is as follows. The UvrABC repair system catalyzes the recognition and processing of DNA lesions. UvrC both incises the 5' and 3' sides of the lesion. The N-terminal half is responsible for the 3' incision and the C-terminal half is responsible for the 5' incision. This Lysinibacillus sphaericus (strain C3-41) protein is UvrABC system protein C.